Consider the following 242-residue polypeptide: MTHSPLAQFDIKKLIDIKMFGFDISFTNSSIYMLLASILALTYFYLAFYNRKLVPSRLQVSAEIVYNLVADMLNQNIGVKGHKFIPLVFSLFIFVLFSNLLGMTPYSFTATSHIIVTFTLAIIVFLTVTIVGFVKHGLRFLTLFLPYGTPLWLAPLMIVIELFTYLAKPVSLSLRLAANMMAGHVLLKVIAGFTVSLMIYLKFLPIPIIVILIGFEIFVAILQAYIFTILSCMYLNDAINLH.

Transmembrane regions (helical) follow at residues 29-49 (SSIY…LAFY), 84-104 (FIPL…LGMT), 114-134 (IIVT…VGFV), 140-160 (FLTL…MIVI), 181-201 (MAGH…MIYL), and 203-223 (FLPI…AILQ).

It belongs to the ATPase A chain family. F-type ATPases have 2 components, CF(1) - the catalytic core - and CF(0) - the membrane proton channel. CF(1) has five subunits: alpha(3), beta(3), gamma(1), delta(1), epsilon(1). CF(0) has three main subunits: a(1), b(2) and c(9-12). The alpha and beta chains form an alternating ring which encloses part of the gamma chain. CF(1) is attached to CF(0) by a central stalk formed by the gamma and epsilon chains, while a peripheral stalk is formed by the delta and b chains.

Its subcellular location is the cell inner membrane. Key component of the proton channel; it plays a direct role in the translocation of protons across the membrane. The polypeptide is ATP synthase subunit a (Rickettsia akari (strain Hartford)).